Consider the following 141-residue polypeptide: Large ribosomal subunit protein uL11 (141 aa).

This sequence belongs to the universal ribosomal protein uL11 family. Part of the ribosomal stalk of the 50S ribosomal subunit. Interacts with L10 and the large rRNA to form the base of the stalk. L10 forms an elongated spine to which L12 dimers bind in a sequential fashion forming a multimeric L10(L12)X complex. One or more lysine residues are methylated.

In terms of biological role, forms part of the ribosomal stalk which helps the ribosome interact with GTP-bound translation factors. This Synechocystis sp. (strain ATCC 27184 / PCC 6803 / Kazusa) protein is Large ribosomal subunit protein uL11.